The sequence spans 283 residues: Phosphatidylglycerol--prolipoprotein diacylglyceryl transferase (283 aa).

7 helical membrane passes run 21-41 (IEVH…FYMA), 62-82 (YFLW…ILIY), 106-126 (FIGI…IASY), 136-156 (LLIY…FGRI), 190-210 (PSQL…VMWA), 218-238 (GLLI…AEFY), and 252-272 (LSMG…ILLY). Arginine 155 contributes to the a 1,2-diacyl-sn-glycero-3-phospho-(1'-sn-glycerol) binding site.

The protein belongs to the Lgt family.

Its subcellular location is the cell inner membrane. It catalyses the reaction L-cysteinyl-[prolipoprotein] + a 1,2-diacyl-sn-glycero-3-phospho-(1'-sn-glycerol) = an S-1,2-diacyl-sn-glyceryl-L-cysteinyl-[prolipoprotein] + sn-glycerol 1-phosphate + H(+). It participates in protein modification; lipoprotein biosynthesis (diacylglyceryl transfer). Catalyzes the transfer of the diacylglyceryl group from phosphatidylglycerol to the sulfhydryl group of the N-terminal cysteine of a prolipoprotein, the first step in the formation of mature lipoproteins. This Helicobacter acinonychis (strain Sheeba) protein is Phosphatidylglycerol--prolipoprotein diacylglyceryl transferase.